A 171-amino-acid chain; its full sequence is Ribosome maturation factor RimP (171 aa).

This sequence belongs to the RimP family.

The protein resides in the cytoplasm. Required for maturation of 30S ribosomal subunits. This is Ribosome maturation factor RimP from Anaeromyxobacter sp. (strain Fw109-5).